Reading from the N-terminus, the 470-residue chain is ATP synthase subunit beta (470 aa).

155 to 162 (GGAGVGKT) provides a ligand contact to ATP.

The protein belongs to the ATPase alpha/beta chains family. F-type ATPases have 2 components, CF(1) - the catalytic core - and CF(0) - the membrane proton channel. CF(1) has five subunits: alpha(3), beta(3), gamma(1), delta(1), epsilon(1). CF(0) has three main subunits: a(1), b(2) and c(9-12). The alpha and beta chains form an alternating ring which encloses part of the gamma chain. CF(1) is attached to CF(0) by a central stalk formed by the gamma and epsilon chains, while a peripheral stalk is formed by the delta and b chains.

It is found in the cell membrane. The enzyme catalyses ATP + H2O + 4 H(+)(in) = ADP + phosphate + 5 H(+)(out). In terms of biological role, produces ATP from ADP in the presence of a proton gradient across the membrane. The catalytic sites are hosted primarily by the beta subunits. The chain is ATP synthase subunit beta from Staphylococcus aureus (strain MW2).